Here is a 256-residue protein sequence, read N- to C-terminus: Cysteine-rich repeat secretory protein 29 (256 aa).

The N-terminal stretch at 1 to 26 (MSSVFGSVHILAMIAIQLLLIHSVSS) is a signal peptide. 2 Gnk2-homologous domains span residues 33–136 (YLHH…SVAS) and 142–253 (YEND…LYPF).

This sequence belongs to the cysteine-rich repeat secretory protein family.

The protein resides in the secreted. This is Cysteine-rich repeat secretory protein 29 (CRRSP29) from Arabidopsis thaliana (Mouse-ear cress).